The primary structure comprises 574 residues: Golgin subfamily A member 6-like protein 4 (574 aa).

The span at 1-11 (MWPQPRFPPHP) shows a compositional bias: pro residues. Disordered regions lie at residues 1–77 (MWPQ…YGEG) and 491–552 (KELK…AAGG). The span at 51–62 (NGSSPDTATSGG) shows a compositional bias: polar residues. Residues 157–496 (SKVEQLQDET…EQQVKELKKS (340 aa)) are a coiled coil. Residues 491–504 (KELKKSGGAEEPRG) show a composition bias toward basic and acidic residues. A compositionally biased stretch (low complexity) spans 508–523 (AAAARPVAGAPVPQGA).

The protein belongs to the GOLGA6 family.

This is Golgin subfamily A member 6-like protein 4 (GOLGA6L4) from Homo sapiens (Human).